A 1858-amino-acid chain; its full sequence is Protein ROS1C (1858 aa).

Basic and acidic residues predominate over residues 347-356 (TEALKGEDAP). 2 disordered regions span residues 347-416 (TEAL…AEPF) and 1288-1309 (PDTA…KNSE). 2 stretches are compositionally biased toward basic residues: residues 360-370 (LKTRRRKHRPK) and 394-404 (KPKRKYVRKNR). 4 residues coordinate [4Fe-4S] cluster: C1492, C1499, C1502, and C1508.

The protein belongs to the DNA glycosylase family. DEMETER subfamily. It depends on [4Fe-4S] cluster as a cofactor. As to expression, expressed in pistils and immature seeds. Expressed a low levels in roots, leaves and anthers.

The protein resides in the nucleus. Functionally, bifunctional DNA glycosylase/lyase, which excises 5-methylcytosine (5-meC) and 5-hydroxymethylcytosine (5-hmeC), leaving an apyrimidinic (AP) site that is subsequently incised by the lyase activity. Is responsible for the demethylation of methylated cytosine residues of Tos17 retrotransposon DNA. Demethylation of Tos17 cytosine residues promotes its transposition. May be involved in seed development. The sequence is that of Protein ROS1C from Oryza sativa subsp. japonica (Rice).